A 132-amino-acid polypeptide reads, in one-letter code: Small ribosomal subunit protein uS11 (132 aa).

This sequence belongs to the universal ribosomal protein uS11 family. Part of the 30S ribosomal subunit. Interacts with proteins S7 and S18. Binds to IF-3.

In terms of biological role, located on the platform of the 30S subunit, it bridges several disparate RNA helices of the 16S rRNA. Forms part of the Shine-Dalgarno cleft in the 70S ribosome. The sequence is that of Small ribosomal subunit protein uS11 from Leifsonia xyli subsp. xyli (strain CTCB07).